Here is an 822-residue protein sequence, read N- to C-terminus: Adhesion G protein-coupled receptor E2 (822 aa).

A signal peptide spans methionine 1–alanine 18. At glutamate 19–threonine 530 the chain is on the extracellular side. The region spanning aspartate 22–aspartate 63 is the EGF-like 1 domain. 5 disulfide bridges follow: cysteine 26–cysteine 36, cysteine 30–cysteine 42, cysteine 44–cysteine 62, cysteine 68–cysteine 82, and cysteine 76–cysteine 91. N-linked (GlcNAc...) asparagine glycosylation is found at asparagine 33 and asparagine 38. The EGF-like 1; calcium-binding domain occupies aspartate 64 to alanine 103. The N-linked (GlcNAc...) asparagine glycan is linked to asparagine 108. One can recognise an EGF-like 2; calcium-binding domain in the interval aspartate 116–threonine 159. 5 disulfide bridges follow: cysteine 120-cysteine 133, cysteine 127-cysteine 142, cysteine 144-cysteine 158, cysteine 164-cysteine 177, and cysteine 171-cysteine 186. In terms of domain architecture, EGF-like 3; calcium-binding spans aspartate 160 to serine 198. N-linked (GlcNAc...) asparagine glycosylation is found at asparagine 203, asparagine 222, asparagine 351, asparagine 371, asparagine 427, asparagine 449, and asparagine 453. An EGF-like 4; calcium-binding domain is found at aspartate 209–isoleucine 247. 2 disulfides stabilise this stretch: cysteine 213–cysteine 226 and cysteine 220–cysteine 235. Residues asparagine 351–glutamine 523 enclose the GAIN-B domain. Intrachain disulfides connect cysteine 475-cysteine 505 and cysteine 493-cysteine 507. Positions cysteine 475–glutamine 523 are GPS. Residues valine 531–phenylalanine 551 traverse the membrane as a helical segment. Topologically, residues leucine 552–threonine 562 are cytoplasmic. Residues serine 563–isoleucine 583 traverse the membrane as a helical segment. Residues aspartate 584–glutamate 589 are Extracellular-facing. A helical transmembrane segment spans residues valine 590–methionine 610. At leucine 611 to lysine 637 the chain is on the cytoplasmic side. Residues lysine 638–serine 658 traverse the membrane as a helical segment. Residues arginine 659 to glycine 676 lie on the Extracellular side of the membrane. The helical transmembrane segment at phenylalanine 677–leucine 697 threads the bilayer. The Cytoplasmic segment spans residues valine 698–threonine 728. A helical transmembrane segment spans residues alanine 729–alanine 749. Residues arginine 750 to alanine 753 lie on the Extracellular side of the membrane. A helical membrane pass occupies residues tyrosine 754–leucine 774. The Cytoplasmic portion of the chain corresponds to serine 775–serine 822. Residues glutamate 797 to serine 822 form a disordered region.

Belongs to the G-protein coupled receptor 2 family. Adhesion G-protein coupled receptor (ADGR) subfamily. In terms of assembly, forms a heterodimer, consisting of a large extracellular region non-covalently linked to a seven-transmembrane moiety. Interacts with chondroitin sulfate; the interaction with chondroitin sulfate is calcium-dependent. Interacts with CD55. Post-translationally, autoproteolytically cleaved into 2 subunits, an extracellular alpha subunit and a seven-transmembrane beta subunit.

Its subcellular location is the cell membrane. The protein localises to the cell projection. It localises to the ruffle membrane. Its function is as follows. Cell surface receptor that binds to the chondroitin sulfate moiety of glycosaminoglycan chains and promotes cell attachment. Promotes granulocyte chemotaxis, degranulation and adhesion. In macrophages, promotes the release of inflammatory cytokines, including IL8 and TNF. Signals probably through G-proteins. In Macaca mulatta (Rhesus macaque), this protein is Adhesion G protein-coupled receptor E2 (ADGRE2).